We begin with the raw amino-acid sequence, 81 residues long: Small ribosomal subunit protein bS18 (81 aa).

The protein belongs to the bacterial ribosomal protein bS18 family. As to quaternary structure, part of the 30S ribosomal subunit. Forms a tight heterodimer with protein bS6.

Its function is as follows. Binds as a heterodimer with protein bS6 to the central domain of the 16S rRNA, where it helps stabilize the platform of the 30S subunit. The polypeptide is Small ribosomal subunit protein bS18 (Syntrophobacter fumaroxidans (strain DSM 10017 / MPOB)).